Here is a 598-residue protein sequence, read N- to C-terminus: UvrABC system protein C (598 aa).

The 78-residue stretch at 14-91 (DSPGCYLHKD…IQKNMPKYNI (78 aa)) folds into the GIY-YIG domain. The region spanning 196 to 231 (DKIIEDLRSKMLAASEEMAFERAAEYRDLISGIATM) is the UVR domain.

This sequence belongs to the UvrC family. In terms of assembly, interacts with UvrB in an incision complex.

Its subcellular location is the cytoplasm. Functionally, the UvrABC repair system catalyzes the recognition and processing of DNA lesions. UvrC both incises the 5' and 3' sides of the lesion. The N-terminal half is responsible for the 3' incision and the C-terminal half is responsible for the 5' incision. The protein is UvrABC system protein C of Streptococcus pyogenes serotype M18 (strain MGAS8232).